The following is a 110-amino-acid chain: Flagellar hook-basal body complex protein FliE (110 aa).

The protein belongs to the FliE family.

Its subcellular location is the bacterial flagellum basal body. This chain is Flagellar hook-basal body complex protein FliE, found in Bordetella petrii (strain ATCC BAA-461 / DSM 12804 / CCUG 43448).